The primary structure comprises 323 residues: MKKIAVIGCGFVGSTYILDLLQQGVQADYLLVDKNTNLADGHVRDLRDSKSLKSHNGSTFNVGTYDDLKDADVVAITASIPTVPTADGEVFTDRLQLMTANVKILNEIALELKRVGFKGLSIIPTNPCDVMAGVYQKVTGFDPHKIISTGCQLETMRTRKMISEALGVNSDSVEGFVVGEHGSGAIVPWSVFRVGNVPMKQLIAEGKIKEEYVKDIFSRVVKEAFEIIKFKKATYFGIAESMSLITRAYIYNLNTVLGVGVQLDDKYVASGIYFTVPAVVGKHGWKLHSKLQLSQEEQAAFDKSALNIQKVTKDALDLIGFKN.

Residues valine 12, aspartate 33, and tyrosine 65 each coordinate NAD(+). Substrate is bound by residues arginine 94 and 126–129 (NPCD). Threonine 149 lines the NAD(+) pocket. 154–157 (ETMR) is a binding site for substrate. Residue histidine 181 is the Proton acceptor of the active site. A substrate-binding site is contributed by threonine 234.

It belongs to the LDH/MDH superfamily. LDH family. As to quaternary structure, homotetramer.

The protein resides in the cytoplasm. The catalysed reaction is (S)-lactate + NAD(+) = pyruvate + NADH + H(+). Its pathway is fermentation; pyruvate fermentation to lactate; (S)-lactate from pyruvate: step 1/1. Its function is as follows. Catalyzes the conversion of lactate to pyruvate. The polypeptide is L-lactate dehydrogenase (Mycoplasmoides gallisepticum (strain R(low / passage 15 / clone 2)) (Mycoplasma gallisepticum)).